Reading from the N-terminus, the 388-residue chain is Diacylglycerol O-acyltransferase 2 (388 aa).

Residues 1 to 69 (MKTLIAAYSG…NRSKVEKHLQ (69 aa)) lie on the Cytoplasmic side of the membrane. The chain crosses the membrane as a helical span at residues 70-88 (VISVLQWVLSFLVLGVACS). Over 89–92 (VILM) the chain is Lumenal. Residues 93 to 112 (YTFCTDCWLIAALYFTWLAF) form a helical membrane-spanning segment. At 113 to 388 (DWNTPKKGGR…LPETEVLEVN (276 aa)) the chain is on the cytoplasmic side.

Belongs to the diacylglycerol acyltransferase family. As to quaternary structure, forms multimeric complexes consisting of several DGAT2 subunits. Interacts with SLC27A1 and this interaction is enhanced in the presence of ZFYVE1.

The protein localises to the endoplasmic reticulum membrane. The protein resides in the lipid droplet. It is found in the cytoplasm. It localises to the perinuclear region. It carries out the reaction an acyl-CoA + a 1,2-diacyl-sn-glycerol = a triacyl-sn-glycerol + CoA. The catalysed reaction is all-trans-retinol + an acyl-CoA = an all-trans-retinyl ester + CoA. It catalyses the reaction 2-(9Z-octadecenoyl)-glycerol + (9Z)-octadecenoyl-CoA = 1,2-di-(9Z-octadecenoyl)-sn-glycerol + CoA. The enzyme catalyses 1,2-di-(9Z-octadecenoyl)-sn-glycerol + (9Z)-octadecenoyl-CoA = 1,2,3-tri-(9Z-octadecenoyl)-glycerol + CoA. It carries out the reaction all-trans-retinol + hexadecanoyl-CoA = all-trans-retinyl hexadecanoate + CoA. The catalysed reaction is 1-O-(9Z-octadecenyl)-glycerol + (9Z)-octadecenoyl-CoA = 1-O-(9Z-octadecyl)-3-(9Z-octadecenoyl)-glycerol + CoA. It catalyses the reaction 1-(9Z-octadecenoyl)-glycerol + (9Z)-octadecenoyl-CoA = 1,2-di-(9Z-octadecenoyl)-glycerol + CoA. The enzyme catalyses 1,2-di-(9Z-octadecenoyl)-sn-glycerol + hexadecanoyl-CoA = 1,2-di-(9Z)-octadecenoyl-3-hexadecanoyl-sn-glycerol + CoA. It carries out the reaction 1,3-di-(9Z-octadecenoyl)-glycerol + (9Z)-octadecenoyl-CoA = 1,2,3-tri-(9Z-octadecenoyl)-glycerol + CoA. The catalysed reaction is 2,3-di-(9Z)-octadecenoyl-sn-glycerol + (9Z)-octadecenoyl-CoA = 1,2,3-tri-(9Z-octadecenoyl)-glycerol + CoA. It catalyses the reaction 2-(9Z-octadecenoyl)-glycerol + hexadecanoyl-CoA = 1-hexadecanoyl-2-(9Z-octadecenoyl)-sn-glycerol + CoA. Its pathway is glycerolipid metabolism; triacylglycerol biosynthesis. Its activity is regulated as follows. Inhibited by niacin. Its function is as follows. Essential acyltransferase that catalyzes the terminal and only committed step in triacylglycerol synthesis by using diacylglycerol and fatty acyl CoA as substrates. Required for synthesis and storage of intracellular triglycerides. Probably plays a central role in cytosolic lipid accumulation. In liver, is primarily responsible for incorporating endogenously synthesized fatty acids into triglycerides. Also functions as an acyl-CoA retinol acyltransferase (ARAT). Also able to use 1-monoalkylglycerol (1-MAkG) as an acyl acceptor for the synthesis of monoalkyl-monoacylglycerol (MAMAG). The protein is Diacylglycerol O-acyltransferase 2 of Rattus norvegicus (Rat).